We begin with the raw amino-acid sequence, 627 residues long: MIRYTVAGHSRRCVVGASKRVGAIKCITVAATKRFISNKPNEVFTKLTNDNDPKRDAFFKYTWGSWLKNDKQEKEKRFTKFSIEGLNRILNDIYIQSNEMAKAPDGKILPPVFNKNLTVSLVNNVVPKNIGKINPNEKVQVTTLSSIHEGKHHRIYKVDTNLNKAFILRIPYPLENENTLSYRIRSEVATMDFADLKLGIKVPKIFCYGVNSLNPVRQPFVLQEFIEGELLMKDWDPLIEDGSSNQKKYDNVIKQVSDFQSKLVSLKLNAFGSIYFNNDLKDGNEKEFVKEDIYDGETNPDLQNRWKIGPSVERCLWRHKSHLDFHKQMKPFLGPWPKKSPMDIIKNTGLLEAENAKTRIAMKEAGSSAELMYPRTLKEQITTYENLAKIAPDLFNVKTKAIPNMQELLSPRLFHPDLDPMNIIVNKEAQEAYLLDFEGACTKPFILQNSPQFIAYDGPKIYDLKEDITDFDKLSEAEKVQYQFMYKRTRNQHQWEKKLNDNNPKLITAVAPPVKLLRSPYIAAVERKTEEEYLLIDESLLQLKEVWDIFAQNELVNQKKFPLNYSKEDIERHVEDLQKLHEKLISTPFAATQGWIPQDMFDQLLNSGSIVKQENGDYTVKQPEATK.

A mitochondrion-targeting transit peptide spans Met1–Val43.

Belongs to the AIM9 family.

Its subcellular location is the mitochondrion. The chain is Altered inheritance of mitochondria protein 9, mitochondrial (AIM9) from Saccharomyces cerevisiae (strain ATCC 204508 / S288c) (Baker's yeast).